Here is a 493-residue protein sequence, read N- to C-terminus: Glutamyl-tRNA(Gln) amidotransferase subunit A (493 aa).

Residues Lys78 and Ser159 each act as charge relay system in the active site. Residue Ser183 is the Acyl-ester intermediate of the active site.

The protein belongs to the amidase family. GatA subfamily. As to quaternary structure, heterotrimer of A, B and C subunits.

It carries out the reaction L-glutamyl-tRNA(Gln) + L-glutamine + ATP + H2O = L-glutaminyl-tRNA(Gln) + L-glutamate + ADP + phosphate + H(+). Allows the formation of correctly charged Gln-tRNA(Gln) through the transamidation of misacylated Glu-tRNA(Gln) in organisms which lack glutaminyl-tRNA synthetase. The reaction takes place in the presence of glutamine and ATP through an activated gamma-phospho-Glu-tRNA(Gln). The protein is Glutamyl-tRNA(Gln) amidotransferase subunit A of Sphingopyxis alaskensis (strain DSM 13593 / LMG 18877 / RB2256) (Sphingomonas alaskensis).